Reading from the N-terminus, the 439-residue chain is Trigger factor (439 aa).

Positions 175-260 (SDKLVIDYQN…VKSVYVMKGM (86 aa)) constitute a PPIase FKBP-type domain.

Belongs to the FKBP-type PPIase family. Tig subfamily.

The protein resides in the cytoplasm. The enzyme catalyses [protein]-peptidylproline (omega=180) = [protein]-peptidylproline (omega=0). In terms of biological role, involved in protein export. Acts as a chaperone by maintaining the newly synthesized protein in an open conformation. Functions as a peptidyl-prolyl cis-trans isomerase. The protein is Trigger factor of Ehrlichia chaffeensis (strain ATCC CRL-10679 / Arkansas).